A 323-amino-acid chain; its full sequence is Low affinity immunoglobulin gamma Fc region receptor II-c (323 aa).

The first 42 residues, 1–42 (MGILSFLPVLATESDWADCKSPQPWGHMLLWTAVLFLAPVAG), serve as a signal peptide directing secretion. Residues 43–223 (TPAAPPKAVL…VQAPSSSPMG (181 aa)) lie on the Extracellular side of the membrane. 2 Ig-like C2-type domains span residues 48 to 127 (PKAV…VHLT) and 131 to 213 (EWLV…VTIT). 2 disulfide bridges follow: cysteine 71–cysteine 113 and cysteine 152–cysteine 196. Residues asparagine 106, asparagine 180, and asparagine 187 are each glycosylated (N-linked (GlcNAc...) asparagine). A helical membrane pass occupies residues 224–246 (IIVAVVTGIAVAAIVAAVVALIY). Residues 247 to 323 (CRKKRISANS…PPNDHVNSNN (77 aa)) lie on the Cytoplasmic side of the membrane. Positions 277 to 323 (KRQPEETNNDYETADGGYMTLNPRAPTDDDKNIYLTLPPNDHVNSNN) are disordered. 2 positions are modified to phosphotyrosine; by SRC-type Tyr-kinases: tyrosine 294 and tyrosine 310.

In terms of processing, phosphorylated by SRC-type Tyr-kinases such as LYN, BLK, FYN and SYK. In terms of tissue distribution, isoform IIC1 is detected in monocytes, macrophages, polymorphonuclear cells and natural killer cells.

It localises to the cytoplasm. The protein resides in the cell membrane. Functionally, receptor for the Fc region of complexed immunoglobulins gamma. Low affinity receptor. Involved in a variety of effector and regulatory functions such as phagocytosis of immune complexes and modulation of antibody production by B-cells. The chain is Low affinity immunoglobulin gamma Fc region receptor II-c (FCGR2C) from Homo sapiens (Human).